Reading from the N-terminus, the 467-residue chain is MASISSLGVGSNLPLDQLLTDLTKNEKGRLTPITKQQSANSAKLTAYGTLKSALEKFQTANTALNKADLFKSTVASSTTEDLKVSTTAGAAAGTYKINVTQLAAAQSLATKTTFATTKEQLGDTSVTSRTIKIEQPGRKEPLEIKLDKGDTSMEAIRDAINDADSGIAASIVKVKENEFQLVLTANSGTDNTMKITVEGDTKLNDLLAYDSTTNTGNMQELVKAENAKLNVNGIDIERQSNTVTDAPQGITLTLTKKVTDATVTVTKDDTKAKEAIKSWVDAYNSLVDTFSSLTKYTAVEPGEEASDKNGALLGDSVVRTIQTGIRAQFANSGSNSAFKTMAEIGITQDGTSGKLKIDDDKLTKVLKDNTAAARELLVGDGKETGITTKIATEVKSYLADDGIIDNAQDNVNATLKSLTKQYLSVSNSIDETVARYKAQFTQLDTMMSKLNNTSSYLTQQFTAMNKS.

A coiled-coil region spans residues 411 to 439 (VNATLKSLTKQYLSVSNSIDETVARYKAQ).

It belongs to the FliD family. Homopentamer.

The protein resides in the secreted. It is found in the bacterial flagellum. Functionally, required for the morphogenesis and for the elongation of the flagellar filament by facilitating polymerization of the flagellin monomers at the tip of growing filament. Forms a capping structure, which prevents flagellin subunits (transported through the central channel of the flagellum) from leaking out without polymerization at the distal end. This chain is Flagellar hook-associated protein 2 (fliD), found in Salmonella typhimurium (strain LT2 / SGSC1412 / ATCC 700720).